The chain runs to 237 residues: Sugar fermentation stimulation protein homolog (237 aa).

The protein belongs to the SfsA family.

The sequence is that of Sugar fermentation stimulation protein homolog from Pseudomonas syringae pv. syringae (strain B728a).